A 156-amino-acid chain; its full sequence is CRIB domain-containing protein RIC11 (156 aa).

One can recognise a CRIB domain in the interval I26 to G39. The interval Q87–A156 is disordered. Basic residues predominate over residues I109 to P120. Residues S121–K142 show a composition bias toward low complexity.

Functionally, functions as a downstream effector of Rho-related GTP binding proteins of the 'Rho of Plants' (ROPs) family. Participates in the propagation of ROP GTPase signals in specific cellular responses. The chain is CRIB domain-containing protein RIC11 (RIC11) from Arabidopsis thaliana (Mouse-ear cress).